Reading from the N-terminus, the 664-residue chain is DNA ligase (664 aa).

NAD(+) is bound by residues 30-34 (DFEFD), 79-80 (SL), and glutamate 109. The active-site N6-AMP-lysine intermediate is lysine 111. Residues arginine 132, glutamate 169, lysine 284, and lysine 308 each contribute to the NAD(+) site. Positions 403, 406, 421, and 427 each coordinate Zn(2+). One can recognise a BRCT domain in the interval 586–664 (NRSEKLKGLT…NEDAFLNMLE (79 aa)).

This sequence belongs to the NAD-dependent DNA ligase family. LigA subfamily. Mg(2+) is required as a cofactor. Mn(2+) serves as cofactor.

The enzyme catalyses NAD(+) + (deoxyribonucleotide)n-3'-hydroxyl + 5'-phospho-(deoxyribonucleotide)m = (deoxyribonucleotide)n+m + AMP + beta-nicotinamide D-nucleotide.. In terms of biological role, DNA ligase that catalyzes the formation of phosphodiester linkages between 5'-phosphoryl and 3'-hydroxyl groups in double-stranded DNA using NAD as a coenzyme and as the energy source for the reaction. It is essential for DNA replication and repair of damaged DNA. The protein is DNA ligase of Parabacteroides distasonis (strain ATCC 8503 / DSM 20701 / CIP 104284 / JCM 5825 / NCTC 11152).